Here is a 381-residue protein sequence, read N- to C-terminus: Succinyl-diaminopimelate desuccinylase (381 aa).

H69 is a Zn(2+) binding site. Residue D71 is part of the active site. D103 serves as a coordination point for Zn(2+). E137 functions as the Proton acceptor in the catalytic mechanism. Zn(2+) is bound by residues E138, E166, and H355.

It belongs to the peptidase M20A family. DapE subfamily. As to quaternary structure, homodimer. Zn(2+) serves as cofactor. Requires Co(2+) as cofactor.

It catalyses the reaction N-succinyl-(2S,6S)-2,6-diaminopimelate + H2O = (2S,6S)-2,6-diaminopimelate + succinate. The protein operates within amino-acid biosynthesis; L-lysine biosynthesis via DAP pathway; LL-2,6-diaminopimelate from (S)-tetrahydrodipicolinate (succinylase route): step 3/3. In terms of biological role, catalyzes the hydrolysis of N-succinyl-L,L-diaminopimelic acid (SDAP), forming succinate and LL-2,6-diaminopimelate (DAP), an intermediate involved in the bacterial biosynthesis of lysine and meso-diaminopimelic acid, an essential component of bacterial cell walls. The chain is Succinyl-diaminopimelate desuccinylase from Rickettsia rickettsii (strain Iowa).